A 339-amino-acid polypeptide reads, in one-letter code: tRNA (guanine-N(7)-)-methyltransferase (339 aa).

The interval 1–20 (MTPPPAKRQKRNEYRKANTA) is disordered. Residues glycine 94 and 117–118 (EI) each bind S-adenosyl-L-methionine. A disordered region spans residues 141–186 (RSSAIPSESSPAAQQPQQHHQQQLQATETAADAASPSSPDATGETL). Over residues 142–181 (SSAIPSESSPAAQQPQQHHQQQLQATETAADAASPSSPDA) the composition is skewed to low complexity. S-adenosyl-L-methionine contacts are provided by residues 202 to 203 (NT) and cysteine 222. Residue aspartate 225 is part of the active site. An S-adenosyl-L-methionine-binding site is contributed by 311–313 (TEE).

This sequence belongs to the class I-like SAM-binding methyltransferase superfamily. TrmB family. In terms of assembly, forms a complex with trm82.

It is found in the nucleus. The enzyme catalyses guanosine(46) in tRNA + S-adenosyl-L-methionine = N(7)-methylguanosine(46) in tRNA + S-adenosyl-L-homocysteine. It functions in the pathway tRNA modification; N(7)-methylguanine-tRNA biosynthesis. Its function is as follows. Catalyzes the formation of N(7)-methylguanine at position 46 (m7G46) in tRNA. The sequence is that of tRNA (guanine-N(7)-)-methyltransferase (trm8) from Aspergillus clavatus (strain ATCC 1007 / CBS 513.65 / DSM 816 / NCTC 3887 / NRRL 1 / QM 1276 / 107).